The chain runs to 865 residues: Serine/threonine-protein kinase greatwall (865 aa).

Position 1 is an N-acetylmethionine (M1). One can recognise a Protein kinase domain in the interval 34 to 821 (FTIVKPISRG…MRELKQHPLF (788 aa)). ATP contacts are provided by residues 40 to 48 (ISRGAFGKV) and K61. D155 functions as the Proton acceptor in the catalytic mechanism. 2 positions are modified to phosphothreonine: T206 and T221. Residues S362 and S442 each carry the phosphoserine modification. Position 508 is a phosphothreonine (T508). S545, S619, S644, and S655 each carry phosphoserine. T708 is subject to Phosphothreonine. Phosphoserine is present on S711. T727 is subject to Phosphothreonine; by CDK1. An AGC-kinase C-terminal domain is found at 822 to 865 (SEVDWENLQHQTMPFVPQPDDETDTSYFEARNNAQHLTISGFSL). Phosphoserine occurs at positions 861 and 864.

It belongs to the protein kinase superfamily. AGC Ser/Thr protein kinase family. Phosphorylation at Thr-727 by CDK1 during M phase activates its kinase activity. Maximum phosphorylation occurs in prometaphase.

It is found in the cytoplasm. Its subcellular location is the cytoskeleton. It localises to the microtubule organizing center. The protein resides in the centrosome. The protein localises to the nucleus. The enzyme catalyses L-seryl-[protein] + ATP = O-phospho-L-seryl-[protein] + ADP + H(+). It carries out the reaction L-threonyl-[protein] + ATP = O-phospho-L-threonyl-[protein] + ADP + H(+). Functionally, serine/threonine kinase that plays a key role in M phase by acting as a regulator of mitosis entry and maintenance. Acts by promoting the inactivation of protein phosphatase 2A (PP2A) during M phase: does not directly inhibit PP2A but acts by mediating phosphorylation and subsequent activation of ARPP19 and ENSA at 'Ser-62' and 'Ser-67', respectively. ARPP19 and ENSA are phosphatase inhibitors that specifically inhibit the PPP2R2D (PR55-delta) subunit of PP2A. Inactivation of PP2A during M phase is essential to keep cyclin-B1-CDK1 activity high. Following DNA damage, it is also involved in checkpoint recovery by being inhibited. The sequence is that of Serine/threonine-protein kinase greatwall (Mastl) from Mus musculus (Mouse).